Reading from the N-terminus, the 493-residue chain is D-aminoacyl-tRNA deacylase (493 aa).

The segment covering 22 to 37 (DLGDWERRDDPSRPDA) has biased composition (basic and acidic residues). Disordered stretches follow at residues 22-44 (DLGD…GTYY) and 441-493 (PEGP…EPSE).

The protein belongs to the DtdA deacylase family. Monomer. Requires Zn(2+) as cofactor.

The enzyme catalyses a D-aminoacyl-tRNA + H2O = a tRNA + a D-alpha-amino acid + H(+). The catalysed reaction is glycyl-tRNA(Ala) + H2O = tRNA(Ala) + glycine + H(+). In terms of biological role, D-aminoacyl-tRNA deacylase with broad substrate specificity. By recycling D-aminoacyl-tRNA to D-amino acids and free tRNA molecules, this enzyme counteracts the toxicity associated with the formation of D-aminoacyl-tRNA entities in vivo. The protein is D-aminoacyl-tRNA deacylase of Halorubrum lacusprofundi (strain ATCC 49239 / DSM 5036 / JCM 8891 / ACAM 34).